A 156-amino-acid polypeptide reads, in one-letter code: Cyanate hydratase (156 aa).

Catalysis depends on residues arginine 96, glutamate 99, and serine 122.

The protein belongs to the cyanase family.

The enzyme catalyses cyanate + hydrogencarbonate + 3 H(+) = NH4(+) + 2 CO2. Its function is as follows. Catalyzes the reaction of cyanate with bicarbonate to produce ammonia and carbon dioxide. The protein is Cyanate hydratase of Photorhabdus laumondii subsp. laumondii (strain DSM 15139 / CIP 105565 / TT01) (Photorhabdus luminescens subsp. laumondii).